We begin with the raw amino-acid sequence, 225 residues long: Cytidylate kinase (225 aa).

11–19 (GPAAAGKST) contacts ATP.

This sequence belongs to the cytidylate kinase family. Type 1 subfamily.

The protein localises to the cytoplasm. It carries out the reaction CMP + ATP = CDP + ADP. The catalysed reaction is dCMP + ATP = dCDP + ADP. The chain is Cytidylate kinase from Bacillus cereus (strain B4264).